The chain runs to 394 residues: Protein-glutamate methylesterase/protein-glutamine glutaminase (394 aa).

Residues 1-24 form a disordered region; it reads MSDGFGRPPPPAPAGHPTGAAGGD. Over residues 15–24 the composition is skewed to low complexity; the sequence is GHPTGAAGGD. Positions 27 to 145 constitute a Response regulatory domain; sequence RVMVVDDSAV…EIGGADAFKR (119 aa). Position 78 is a 4-aspartylphosphate (aspartate 78). The 203-residue stretch at 191-393 folds into the CheB-type methylesterase domain; sequence PAPAVGSVGQ…PYIRKFASRA (203 aa). Catalysis depends on residues serine 211, histidine 238, and aspartate 335.

It belongs to the CheB family. Phosphorylated by CheA. Phosphorylation of the N-terminal regulatory domain activates the methylesterase activity.

It localises to the cytoplasm. It carries out the reaction [protein]-L-glutamate 5-O-methyl ester + H2O = L-glutamyl-[protein] + methanol + H(+). It catalyses the reaction L-glutaminyl-[protein] + H2O = L-glutamyl-[protein] + NH4(+). Functionally, involved in chemotaxis. Part of a chemotaxis signal transduction system that modulates chemotaxis in response to various stimuli. Catalyzes the demethylation of specific methylglutamate residues introduced into the chemoreceptors (methyl-accepting chemotaxis proteins or MCP) by CheR. Also mediates the irreversible deamidation of specific glutamine residues to glutamic acid. This chain is Protein-glutamate methylesterase/protein-glutamine glutaminase, found in Azospirillum brasilense.